The primary structure comprises 155 residues: Ribosome maturation factor RimP (155 aa).

Belongs to the RimP family.

Its subcellular location is the cytoplasm. Required for maturation of 30S ribosomal subunits. In Maridesulfovibrio salexigens (strain ATCC 14822 / DSM 2638 / NCIMB 8403 / VKM B-1763) (Desulfovibrio salexigens), this protein is Ribosome maturation factor RimP.